Here is a 434-residue protein sequence, read N- to C-terminus: Histidinol dehydrogenase (434 aa).

Glu-260 and His-263 together coordinate Zn(2+). Catalysis depends on proton acceptor residues Glu-330 and His-331. His-423 lines the Zn(2+) pocket.

The protein belongs to the histidinol dehydrogenase family. Zn(2+) serves as cofactor.

It catalyses the reaction L-histidinol + 2 NAD(+) + H2O = L-histidine + 2 NADH + 3 H(+). It participates in amino-acid biosynthesis; L-histidine biosynthesis; L-histidine from 5-phospho-alpha-D-ribose 1-diphosphate: step 9/9. Catalyzes the sequential NAD-dependent oxidations of L-histidinol to L-histidinaldehyde and then to L-histidine. This Synechocystis sp. (strain ATCC 27184 / PCC 6803 / Kazusa) protein is Histidinol dehydrogenase (hisD).